A 133-amino-acid chain; its full sequence is Ribonuclease P protein component (133 aa).

This sequence belongs to the RnpA family. In terms of assembly, consists of a catalytic RNA component (M1 or rnpB) and a protein subunit.

The enzyme catalyses Endonucleolytic cleavage of RNA, removing 5'-extranucleotides from tRNA precursor.. RNaseP catalyzes the removal of the 5'-leader sequence from pre-tRNA to produce the mature 5'-terminus. It can also cleave other RNA substrates such as 4.5S RNA. The protein component plays an auxiliary but essential role in vivo by binding to the 5'-leader sequence and broadening the substrate specificity of the ribozyme. The polypeptide is Ribonuclease P protein component (Paramagnetospirillum magneticum (strain ATCC 700264 / AMB-1) (Magnetospirillum magneticum)).